Consider the following 124-residue polypeptide: Small ribosomal subunit protein uS13 (124 aa).

The tract at residues 95–124 (GLPVNGQRTRTNARSSKGPRRTVAGKKKAR) is disordered. The span at 100–109 (GQRTRTNARS) shows a compositional bias: polar residues. Basic residues predominate over residues 111–124 (KGPRRTVAGKKKAR).

This sequence belongs to the universal ribosomal protein uS13 family. Part of the 30S ribosomal subunit. Forms a loose heterodimer with protein S19. Forms two bridges to the 50S subunit in the 70S ribosome.

In terms of biological role, located at the top of the head of the 30S subunit, it contacts several helices of the 16S rRNA. In the 70S ribosome it contacts the 23S rRNA (bridge B1a) and protein L5 of the 50S subunit (bridge B1b), connecting the 2 subunits; these bridges are implicated in subunit movement. Contacts the tRNAs in the A and P-sites. This is Small ribosomal subunit protein uS13 from Tropheryma whipplei (strain TW08/27) (Whipple's bacillus).